The following is a 497-amino-acid chain: MRRPSRRRSKASTPPRSHTTPRRTGPSDSRRRPGTKEQPRPSVQGGTRQAEHDLKVSSPNSESSQYSTSELWSHKVIANYSELFAASVGNVDWLRFCVNPERKEIIVDDKGFTAIHFAAQKCQLSCLKVLIEEYKYPVDLPTNKGQTPLHLVIHKNNKSDILPCIDYLLKKGAAINSQTYNGSTPLHLASCNGLLGCIKLLVQSGANVHARDATGFKPIDYCRLWNHRTCARFLKDVMWKHDKKVLAQEMEKLRTLKEKLTILEYHYLVEYQKEHQILREAHFRKWLQNKVLAQTLGSADSKQKAGVQPWSLASNTLRCPITESLHYPSVEAQLKNLPSPVVPPKPIYKQTTISRPKLWNYSANPARSPITNIGHPQNIRLGVHPEPYKEHDFRRFLEVTRNKHGGACLRTVDRQLVTPVPQLPFEMMVRVLYPGTQPYRMKVPQGLYPRDILKVPEKRHVGDTCSNTMAMTLRETFDKPFLDSLEVCRTRVAPPSK.

The span at 1-10 (MRRPSRRRSK) shows a compositional bias: basic residues. Residues 1 to 65 (MRRPSRRRSK…VSSPNSESSQ (65 aa)) are disordered. Residues 12–27 (STPPRSHTTPRRTGPS) are compositionally biased toward low complexity. Positions 28–39 (DSRRRPGTKEQP) are enriched in basic and acidic residues. 3 ANK repeats span residues 110 to 140 (KGFT…PVDL), 144 to 177 (KGQT…AINS), and 181 to 210 (NGST…NVHA). Residues 239–264 (WKHDKKVLAQEMEKLRTLKEKLTILE) adopt a coiled-coil conformation.

Interacts with PSRC1; recruited by PSRC1 to the spindle during mitosis. Post-translationally, phosphorylated during mitosis.

Its subcellular location is the cytoplasm. The protein localises to the cytoskeleton. The protein resides in the spindle. It is found in the spindle pole. Required for normal progression through mitosis. Involved in chromosome alignment and cytokinesis via regulation of microtubules polymerization. The protein is Ankyrin repeat domain-containing protein 53 (Ankrd53) of Mus musculus (Mouse).